The following is a 320-amino-acid chain: Olfactory receptor 5C1 (320 aa).

The Extracellular portion of the chain corresponds to 1 to 29; it reads MNSENLTRAAVAPAEFVLLGITNRWDLRV. A glycan (N-linked (GlcNAc...) asparagine) is linked at Asn-5. The helical transmembrane segment at 30 to 50 threads the bilayer; the sequence is ALFLTCLPVYLVSLLGNMGMA. The Cytoplasmic segment spans residues 51–58; sequence LLIRMDAR. A helical membrane pass occupies residues 59-79; sequence LHTPMYFFLANLSLLDACYSS. At 80–103 the chain is on the extracellular side; that stretch reads AIGPKMLVDLLLPRATIPYTACAL. The cysteines at positions 101 and 193 are disulfide-linked. The helical transmembrane segment at 104–124 threads the bilayer; the sequence is QMFVFAGLADTECCLLAAMAY. At 125–143 the chain is on the cytoplasmic side; the sequence is DRYVAIRNPLLYTTAMSQR. Residues 144 to 164 form a helical membrane-spanning segment; it reads LCLALLGASGLGGAVSAFVHT. Residues 165–200 lie on the Extracellular side of the membrane; the sequence is TLTFRLSFCRSRKINSFFCDIPPLLAISCSDTSLNE. Residues 201 to 221 form a helical membrane-spanning segment; the sequence is LLLFAICGFIQTATVLAITVS. At 222 to 241 the chain is on the cytoplasmic side; the sequence is YGFIAGAVIHMRSVEGSRRA. A helical membrane pass occupies residues 242 to 262; the sequence is ASTGGSHLTAVAMMYGTLIFM. Residues 263-275 lie on the Extracellular side of the membrane; that stretch reads YLRPSSSYALDTD. Residues 276–296 form a helical membrane-spanning segment; that stretch reads KMASVFYTLVIPSLNPLIYSL. Topologically, residues 297-320 are cytoplasmic; that stretch reads RNKEVKEALRQTWSRFHCPGQGSQ.

Belongs to the G-protein coupled receptor 1 family.

It localises to the cell membrane. Odorant receptor. This chain is Olfactory receptor 5C1 (OR5C1), found in Homo sapiens (Human).